Here is a 593-residue protein sequence, read N- to C-terminus: Elongation factor 4 (593 aa).

Positions 2 to 181 (DKIRNFCIIA…AVIERIPHPQ (180 aa)) constitute a tr-type G domain. GTP-binding positions include 14–19 (DHGKST) and 128–131 (NKCD).

This sequence belongs to the TRAFAC class translation factor GTPase superfamily. Classic translation factor GTPase family. LepA subfamily.

The protein resides in the cell inner membrane. The catalysed reaction is GTP + H2O = GDP + phosphate + H(+). In terms of biological role, required for accurate and efficient protein synthesis under certain stress conditions. May act as a fidelity factor of the translation reaction, by catalyzing a one-codon backward translocation of tRNAs on improperly translocated ribosomes. Back-translocation proceeds from a post-translocation (POST) complex to a pre-translocation (PRE) complex, thus giving elongation factor G a second chance to translocate the tRNAs correctly. Binds to ribosomes in a GTP-dependent manner. This chain is Elongation factor 4, found in Bacteroides fragilis (strain ATCC 25285 / DSM 2151 / CCUG 4856 / JCM 11019 / LMG 10263 / NCTC 9343 / Onslow / VPI 2553 / EN-2).